The primary structure comprises 677 residues: UvrABC system protein B (677 aa).

The 388-residue stretch at 25 to 412 (QGVNGGERYQ…GGEVAQQVIR (388 aa)) folds into the Helicase ATP-binding domain. Position 38-45 (38-45 (GATGTGKT)) interacts with ATP. The Beta-hairpin motif lies at 91–114 (YYDYYQPEAYVPVSDTYIAKTASI). Residues 429 to 591 (QVDDLLGEIR…IVPTAAGKKA (163 aa)) form the Helicase C-terminal domain. The region spanning 639–674 (PELIDQLEGKMKEAAKKLDFEDAANLRDRIKQLRQK) is the UVR domain.

This sequence belongs to the UvrB family. As to quaternary structure, forms a heterotetramer with UvrA during the search for lesions. Interacts with UvrC in an incision complex.

The protein resides in the cytoplasm. Its function is as follows. The UvrABC repair system catalyzes the recognition and processing of DNA lesions. A damage recognition complex composed of 2 UvrA and 2 UvrB subunits scans DNA for abnormalities. Upon binding of the UvrA(2)B(2) complex to a putative damaged site, the DNA wraps around one UvrB monomer. DNA wrap is dependent on ATP binding by UvrB and probably causes local melting of the DNA helix, facilitating insertion of UvrB beta-hairpin between the DNA strands. Then UvrB probes one DNA strand for the presence of a lesion. If a lesion is found the UvrA subunits dissociate and the UvrB-DNA preincision complex is formed. This complex is subsequently bound by UvrC and the second UvrB is released. If no lesion is found, the DNA wraps around the other UvrB subunit that will check the other stand for damage. This is UvrABC system protein B from Parasynechococcus marenigrum (strain WH8102).